A 143-amino-acid chain; its full sequence is Peptide methionine sulfoxide reductase MsrB (143 aa).

Residues 16–139 form the MsrB domain; that stretch reads DAELRRRLTP…NSAALNFESR (124 aa). Positions 55, 58, 104, and 107 each coordinate Zn(2+). C128 (nucleophile) is an active-site residue.

The protein belongs to the MsrB Met sulfoxide reductase family. Zn(2+) is required as a cofactor.

The catalysed reaction is L-methionyl-[protein] + [thioredoxin]-disulfide + H2O = L-methionyl-(R)-S-oxide-[protein] + [thioredoxin]-dithiol. This Burkholderia multivorans (strain ATCC 17616 / 249) protein is Peptide methionine sulfoxide reductase MsrB.